We begin with the raw amino-acid sequence, 565 residues long: Thiol:disulfide interchange protein DsbD (565 aa).

Residues 1–19 (MAQRIFTLILLLCSTSVFA) form the signal peptide. Disulfide bonds link C122–C128 and C182–C304. A run of 7 helical transmembrane segments spans residues 163-183 (LPFS…TPCV), 208-228 (LLTF…GLVV), 243-263 (YVLI…FGLF), 289-309 (GVFI…TAPL), 323-343 (WLGG…LMLI), 357-377 (WMEQ…VFLL), and 384-404 (IWGL…AFIT). The Thioredoxin domain maps to 434-565 (WAFGETHTAQ…FSAHLRDRQP (132 aa)). An intrachain disulfide couples C480 to C483.

The protein belongs to the thioredoxin family. DsbD subfamily.

It is found in the cell inner membrane. The catalysed reaction is [protein]-dithiol + NAD(+) = [protein]-disulfide + NADH + H(+). It catalyses the reaction [protein]-dithiol + NADP(+) = [protein]-disulfide + NADPH + H(+). In terms of biological role, required to facilitate the formation of correct disulfide bonds in some periplasmic proteins and for the assembly of the periplasmic c-type cytochromes. Acts by transferring electrons from cytoplasmic thioredoxin to the periplasm. This transfer involves a cascade of disulfide bond formation and reduction steps. This is Thiol:disulfide interchange protein DsbD from Escherichia coli O6:K15:H31 (strain 536 / UPEC).